Here is a 407-residue protein sequence, read N- to C-terminus: Succinate--CoA ligase [ADP-forming] subunit beta, hydrogenosomal (407 aa).

The N-terminal 9 residues, 1 to 9 (MLSSSFARN), are a transit peptide targeting the hydrogenosome. Residues 18 to 261 (KEICAKYNVA…LKQVNPFEIR (244 aa)) enclose the ATP-grasp domain. ATP is bound by residues Lys55, 62 to 64 (GRG), and Glu124. 2 residues coordinate Mg(2+): Asn216 and Asp230. Substrate contacts are provided by residues Asn281 and 338 to 340 (GIV).

This sequence belongs to the succinate/malate CoA ligase beta subunit family. As to quaternary structure, heterodimer of an alpha and a beta subunit. It depends on Mg(2+) as a cofactor.

It is found in the hydrogenosome. The enzyme catalyses succinate + ATP + CoA = succinyl-CoA + ADP + phosphate. Its pathway is carbohydrate metabolism; tricarboxylic acid cycle; succinate from succinyl-CoA (ligase route): step 1/1. Succinyl-CoA synthetase functions in the citric acid cycle (TCA), coupling the hydrolysis of succinyl-CoA to the synthesis of ATP and thus represents the only step of substrate-level phosphorylation in the TCA. The beta subunit provides nucleotide specificity of the enzyme and binds the substrate succinate, while the binding sites for coenzyme A and phosphate are found in the alpha subunit. This chain is Succinate--CoA ligase [ADP-forming] subunit beta, hydrogenosomal, found in Trichomonas vaginalis.